Consider the following 320-residue polypeptide: L-lactate dehydrogenase 2 (320 aa).

NAD(+) contacts are provided by residues 18–19 (AV), Asp40, and Arg45. Substrate contacts are provided by residues Gln88, Arg94, and 126–129 (NPVD). NAD(+) contacts are provided by residues 124–126 (ITN) and Ser149. Position 154–157 (154–157 (DSAR)) interacts with substrate. Residues Arg159 and 171–176 (KNVHAY) contribute to the beta-D-fructose 1,6-bisphosphate site. Residue His181 is the Proton acceptor of the active site. Residue Tyr228 is modified to Phosphotyrosine. Residue Thr237 coordinates substrate.

It belongs to the LDH/MDH superfamily. LDH family. In terms of assembly, homotetramer.

Its subcellular location is the cytoplasm. The catalysed reaction is (S)-lactate + NAD(+) = pyruvate + NADH + H(+). It participates in fermentation; pyruvate fermentation to lactate; (S)-lactate from pyruvate: step 1/1. With respect to regulation, allosterically activated by fructose 1,6-bisphosphate (FBP). Catalyzes the conversion of lactate to pyruvate. The chain is L-lactate dehydrogenase 2 from Bifidobacterium longum subsp. longum (strain ATCC 15707 / DSM 20219 / JCM 1217 / NCTC 11818 / E194b).